Reading from the N-terminus, the 325-residue chain is Germination protease (325 aa).

Positions Met1–Asp7 are excised as a propeptide.

This sequence belongs to the peptidase A25 family. As to quaternary structure, homotetramer. In terms of processing, autoproteolytically processed. The inactive tetrameric zymogen termed p46 autoprocesses to a smaller form termed p41, which is active only during spore germination.

The catalysed reaction is Endopeptidase action with P4 Glu or Asp, P1 preferably Glu &gt; Asp, P1' hydrophobic and P2' Ala.. Its function is as follows. Initiates the rapid degradation of small, acid-soluble proteins during spore germination. The protein is Germination protease of Clostridium perfringens (strain SM101 / Type A).